Consider the following 257-residue polypeptide: Ribonuclease HII (257 aa).

An RNase H type-2 domain is found at 71 to 257; sequence SLIAGIDEVG…TSFEPIKSML (187 aa). The a divalent metal cation site is built by Asp-77, Glu-78, and Asp-172.

The protein belongs to the RNase HII family. Mn(2+) serves as cofactor. The cofactor is Mg(2+).

The protein localises to the cytoplasm. It catalyses the reaction Endonucleolytic cleavage to 5'-phosphomonoester.. Endonuclease that specifically degrades the RNA of RNA-DNA hybrids. This chain is Ribonuclease HII, found in Streptococcus uberis (strain ATCC BAA-854 / 0140J).